The sequence spans 157 residues: RNA-binding protein 3 (157 aa).

One can recognise an RRM domain in the interval 6–84 (GKLFVGGLNF…RQIRVDHAGK (79 aa)). The residue at position 47 (Arg47) is an Omega-N-methylarginine. Positions 81-157 (HAGKSARGTR…GGNYRDNYDN (77 aa)) are disordered. Residue Arg105 is modified to Asymmetric dimethylarginine; alternate. The residue at position 105 (Arg105) is a Dimethylated arginine; in A2780 ovarian carcinoma cell line. An Omega-N-methylarginine; alternate modification is found at Arg105. Residues 105–114 (RGGGDQGYGS) are compositionally biased toward gly residues. Residues Arg121 and Arg131 each carry the omega-N-methylarginine modification. Ser147 carries the post-translational modification Phosphoserine. Tyr155 is subject to Phosphotyrosine.

As to quaternary structure, interacts with RPL4. Associates with the 60S ribosomal subunits in an RNA-independent manner. Associates with ribosomes. Post-translationally, arg-105 is dimethylated, probably to asymmetric dimethylarginine. Phosphorylated.

Its subcellular location is the nucleus. It localises to the cytoplasm. The protein resides in the cell projection. The protein localises to the dendrite. In terms of biological role, cold-inducible mRNA binding protein that enhances global protein synthesis at both physiological and mild hypothermic temperatures. Reduces the relative abundance of microRNAs, when overexpressed. Enhances phosphorylation of translation initiation factors and active polysome formation. In Homo sapiens (Human), this protein is RNA-binding protein 3 (RBM3).